Consider the following 466-residue polypeptide: Ribulose bisphosphate carboxylase large chain (466 aa).

At lysine 5 the chain carries N6,N6,N6-trimethyllysine. The substrate site is built by asparagine 114 and threonine 164. Lysine 166 (proton acceptor) is an active-site residue. A substrate-binding site is contributed by lysine 168. Lysine 192, aspartate 194, and glutamate 195 together coordinate Mg(2+). N6-carboxylysine is present on lysine 192. Catalysis depends on histidine 285, which acts as the Proton acceptor. Positions 286, 318, and 370 each coordinate substrate.

This sequence belongs to the RuBisCO large chain family. Type I subfamily. In terms of assembly, heterohexadecamer of 8 large chains and 8 small chains; disulfide-linked. The disulfide link is formed within the large subunit homodimers. The cofactor is Mg(2+). The disulfide bond which can form in the large chain dimeric partners within the hexadecamer appears to be associated with oxidative stress and protein turnover.

The protein resides in the plastid. It is found in the chloroplast. It carries out the reaction 2 (2R)-3-phosphoglycerate + 2 H(+) = D-ribulose 1,5-bisphosphate + CO2 + H2O. It catalyses the reaction D-ribulose 1,5-bisphosphate + O2 = 2-phosphoglycolate + (2R)-3-phosphoglycerate + 2 H(+). Its function is as follows. RuBisCO catalyzes two reactions: the carboxylation of D-ribulose 1,5-bisphosphate, the primary event in carbon dioxide fixation, as well as the oxidative fragmentation of the pentose substrate in the photorespiration process. Both reactions occur simultaneously and in competition at the same active site. The chain is Ribulose bisphosphate carboxylase large chain from Averrhoa carambola (Star fruit).